The chain runs to 679 residues: HEAT repeat-containing protein 3 (679 aa).

Residues 1 to 11 (MGKSRTKRFKR) show a composition bias toward basic residues. Positions 1 to 40 (MGKSRTKRFKRPQFSPIESCQAEAAAASNGTGDEEDDGPA) are disordered. Ser-15 bears the Phosphoserine mark. HEAT repeat units lie at residues 38–69 (GPAA…VQQR) and 74–110 (DLAR…SACG). Ser-144 is modified (phosphoserine). Thr-339 is subject to Phosphothreonine.

This sequence belongs to the nuclear import and ribosome assembly adapter family. Component of a hexameric 5S RNP precursor complex, composed of 5S RNA, RRS1, RPF2/BXDC1, RPL5, RPL11 and HEATR3; this complex acts as a precursor for ribosome assembly.

Plays a role in ribosome biogenesis and in nuclear import of the 60S ribosomal protein L5/large ribosomal subunit protein uL18 (RPL5). Required for proper erythrocyte maturation. The polypeptide is HEAT repeat-containing protein 3 (Heatr3) (Mus musculus (Mouse)).